We begin with the raw amino-acid sequence, 661 residues long: MSEGPIRVAPHPIAKRVKHGCKTPHVSHIDDYRSQHRETIGHESDKWWAKKAHELLYWDRPFHTVRSGSFENGDIAWFPEGGLNASYNCVDRWAFKHPEKTAIIYEADEPGEGREISYAELLREVCSIANVLKSFGVKKGDTVSVYLPMTWQAVAAFLACARIGAIHSVVFAGFSAEALRDRMQDCKSRVLITSDEGRRGGKAIATKAIADAALKECPAVEKVLVLKRTGNPVPWTEGRDVWWHEAVARVPRYCPPEVMASEDPLFILYTSGSTGKPKGVVHTTGGYLLCAALTVKYVFDVHPDDRFACMADVGWITGHTYIVYGPLAIGATTTVFESTPVYPTPSRYWETVEKYKLTQFYSAPTAIRLLRRLGHEHVNKHDLSSLRVLGSVGEPINPEAWHWYNEHVGKTECAIVDTFWQTETGSIVVTPFPGAIETKPGAATVPFFGIEPAILEPTTGKVLEGNDVEGVLTIAHPWPSIARTIYGDHQRYLETYMKPYPGYFYTGDGAARDEDGYIWIKGRVDDVINVSGHRLSTAEIESALITHTGVAETAVIGTADELTGQAVYAFVTLKPEFKFDAENEAGLSKELILQVRKIIGPFAAPKRIYIVSDLPKTRSGKIMRRILRKIVAGEADQLGDLSTFADPGIVEVIKEKVASAA.

CoA contacts are provided by residues 199 to 202 (RGGK) and Thr-317. Residues 393-395 (GEP), 417-422 (DTFWQT), Asp-508, and Arg-523 contribute to the ATP site. Ser-531 provides a ligand contact to CoA. Residue Arg-534 coordinates ATP. Position 596 (Arg-596) interacts with CoA.

This sequence belongs to the ATP-dependent AMP-binding enzyme family.

It catalyses the reaction acetate + ATP + CoA = acetyl-CoA + AMP + diphosphate. The polypeptide is Acetyl-coenzyme A synthetase (ACS-1) (Coprinopsis cinerea (Inky cap fungus)).